The chain runs to 220 residues: 7-carboxy-7-deazaguanine synthase (220 aa).

Substrate is bound by residues Ile-16–Gly-18 and Arg-31. The Radical SAM core domain maps to Phe-22 to Pro-215. 3 residues coordinate [4Fe-4S] cluster: Cys-35, Cys-39, and Cys-42. Residue Thr-44 coordinates Mg(2+). Residue Thr-74 coordinates substrate. Gly-76 contributes to the S-adenosyl-L-methionine binding site.

The protein belongs to the radical SAM superfamily. 7-carboxy-7-deazaguanine synthase family. Homodimer. It depends on [4Fe-4S] cluster as a cofactor. Requires S-adenosyl-L-methionine as cofactor. The cofactor is Mg(2+).

The catalysed reaction is 6-carboxy-5,6,7,8-tetrahydropterin + H(+) = 7-carboxy-7-deazaguanine + NH4(+). It functions in the pathway purine metabolism; 7-cyano-7-deazaguanine biosynthesis. Its function is as follows. Catalyzes the complex heterocyclic radical-mediated conversion of 6-carboxy-5,6,7,8-tetrahydropterin (CPH4) to 7-carboxy-7-deazaguanine (CDG), a step common to the biosynthetic pathways of all 7-deazapurine-containing compounds. This Chlorobaculum tepidum (strain ATCC 49652 / DSM 12025 / NBRC 103806 / TLS) (Chlorobium tepidum) protein is 7-carboxy-7-deazaguanine synthase.